The chain runs to 285 residues: Inositol oxygenase (285 aa).

R29 contacts substrate. A Phosphoserine modification is found at S33. 85-87 contacts substrate; sequence DES. Fe cation contacts are provided by H98, H123, and D124. Substrate is bound by residues K127 and 141–142; that span reads GD. Residues H194, H220, and D253 each coordinate Fe cation. 220 to 221 is a binding site for substrate; the sequence is HS.

It belongs to the myo-inositol oxygenase family. Requires Fe cation as cofactor. Kidney specific.

It is found in the cytoplasm. The catalysed reaction is myo-inositol + O2 = D-glucuronate + H2O + H(+). Its pathway is polyol metabolism; myo-inositol degradation into D-glucuronate; D-glucuronate from myo-inositol: step 1/1. The protein is Inositol oxygenase (Miox) of Rattus norvegicus (Rat).